The chain runs to 512 residues: Cytochrome P450 monooxygenase astD (512 aa).

The helical transmembrane segment at 19–39 (MGISILVMLSTFLALGTIFVY) threads the bilayer. N-linked (GlcNAc...) asparagine glycans are attached at residues asparagine 191 and asparagine 413. Residue cysteine 449 coordinates heme.

This sequence belongs to the cytochrome P450 family. Heme serves as cofactor.

Its subcellular location is the membrane. The protein operates within secondary metabolite biosynthesis; terpenoid biosynthesis. In terms of biological role, cytochrome P450 monooxygenase; part of the gene cluster that mediates the biosynthesis of astellolides, drimane-type sesquiterpene esters that show antimicrobial, anti-inflammatory, and anti-tumor activities. The first step in astellolide biosynthesis is performed by the sesquiterpene cyclase astC that catalyzes the formation of drimanyl pyrophosphate from farnesyl pyrophosphate. Drimanyl pyrophosphate is then dephosphorylated by the sesquiterpene phosphatase astI to produce drimanyl monophosphate which is further dephosphorylated to drim-8-ene-11-ol by atsK. Drim-8-ene-11-ol is converted to confertifolin, probably by the cytochrome P450 monooxygenase astD and/or the dehydrogenase astE. The cytochrome P450 monooxygenases astB, astF and astJ then hydroxylate confertifolin at C6, C14, or C15 to form trihydroxy confertifolin. The nonribosomal peptide synthetase astA catalyzes ester bond formation between trihydroxy contifolin and benzoic acid (BA) or 4-hydroxy benzoic acid (4HBA), leading to the formation of dideacetyl astellolides A and B, respectively. Finally, the O-acetyltransferase astG converts dideacetyl astellolides A and B into deacetyl astellolides A and B. The polypeptide is Cytochrome P450 monooxygenase astD (Aspergillus oryzae (strain ATCC 42149 / RIB 40) (Yellow koji mold)).